The following is an 833-amino-acid chain: Leucine--tRNA ligase (833 aa).

Positions 41 to 52 (PYPSGAGLHVGH) match the 'HIGH' region motif. The 'KMSKS' region motif lies at 610 to 614 (KMSKS). Lys613 provides a ligand contact to ATP.

Belongs to the class-I aminoacyl-tRNA synthetase family.

The protein resides in the cytoplasm. It catalyses the reaction tRNA(Leu) + L-leucine + ATP = L-leucyl-tRNA(Leu) + AMP + diphosphate. The chain is Leucine--tRNA ligase from Streptococcus suis (strain 98HAH33).